The following is a 191-amino-acid chain: Nucleoside triphosphate pyrophosphatase (191 aa).

The active-site Proton acceptor is Asp70.

It belongs to the Maf family. The cofactor is a divalent metal cation.

It is found in the cytoplasm. The enzyme catalyses a ribonucleoside 5'-triphosphate + H2O = a ribonucleoside 5'-phosphate + diphosphate + H(+). It carries out the reaction a 2'-deoxyribonucleoside 5'-triphosphate + H2O = a 2'-deoxyribonucleoside 5'-phosphate + diphosphate + H(+). In terms of biological role, nucleoside triphosphate pyrophosphatase. May have a dual role in cell division arrest and in preventing the incorporation of modified nucleotides into cellular nucleic acids. The sequence is that of Nucleoside triphosphate pyrophosphatase from Synechococcus sp. (strain WH7803).